Reading from the N-terminus, the 837-residue chain is Protein translocase subunit SecA (837 aa).

Residues Q87, 105 to 109 (GEGKT), and D494 each bind ATP. The segment at 788–837 (HKESKSDLEYSDSENTETKKKPKRRSEPKVGRNDPCPCGSGKKYKKCCGK) is disordered. Zn(2+)-binding residues include C823, C825, C834, and C835.

This sequence belongs to the SecA family. Monomer and homodimer. Part of the essential Sec protein translocation apparatus which comprises SecA, SecYEG and auxiliary proteins SecDF-YajC and YidC. Zn(2+) is required as a cofactor.

The protein resides in the cell inner membrane. Its subcellular location is the cytoplasm. It carries out the reaction ATP + H2O + cellular proteinSide 1 = ADP + phosphate + cellular proteinSide 2.. Functionally, part of the Sec protein translocase complex. Interacts with the SecYEG preprotein conducting channel. Has a central role in coupling the hydrolysis of ATP to the transfer of proteins into and across the cell membrane, serving as an ATP-driven molecular motor driving the stepwise translocation of polypeptide chains across the membrane. The sequence is that of Protein translocase subunit SecA from Maridesulfovibrio salexigens (strain ATCC 14822 / DSM 2638 / NCIMB 8403 / VKM B-1763) (Desulfovibrio salexigens).